Consider the following 181-residue polypeptide: UPF0398 protein LMHCC_0668 (181 aa).

Belongs to the UPF0398 family.

In Listeria monocytogenes serotype 4a (strain HCC23), this protein is UPF0398 protein LMHCC_0668.